Here is a 215-residue protein sequence, read N- to C-terminus: uncharacterized protein (215 aa).

Transmembrane regions (helical) follow at residues 3 to 23 (LLAYIPTNVLATYLTLVLRSI), 30 to 50 (ANLLAIPNFVLHILLLFGLTW), 59 to 79 (LGLSLLQPLYTVPLLAVLRFW), 87 to 107 (WGTYAIITLILDNPYIHAICV), 122 to 142 (VSTCLYNMFVQAGLIISSNIY), and 156 to 176 (VLFGLALFMFPILIGSKLIYV).

Belongs to the major facilitator superfamily. Allantoate permease family.

It is found in the membrane. This is an uncharacterized protein from Saccharomyces cerevisiae (strain ATCC 204508 / S288c) (Baker's yeast).